A 264-amino-acid polypeptide reads, in one-letter code: 3-methyl-2-oxobutanoate hydroxymethyltransferase (264 aa).

Asp-45 and Asp-84 together coordinate Mg(2+). 3-methyl-2-oxobutanoate contacts are provided by residues 45–46, Asp-84, and Lys-112; that span reads DS. Glu-114 serves as a coordination point for Mg(2+). The Proton acceptor role is filled by Glu-181.

The protein belongs to the PanB family. As to quaternary structure, homodecamer; pentamer of dimers. Requires Mg(2+) as cofactor.

The protein localises to the cytoplasm. It catalyses the reaction 3-methyl-2-oxobutanoate + (6R)-5,10-methylene-5,6,7,8-tetrahydrofolate + H2O = 2-dehydropantoate + (6S)-5,6,7,8-tetrahydrofolate. Its pathway is cofactor biosynthesis; (R)-pantothenate biosynthesis; (R)-pantoate from 3-methyl-2-oxobutanoate: step 1/2. In terms of biological role, catalyzes the reversible reaction in which hydroxymethyl group from 5,10-methylenetetrahydrofolate is transferred onto alpha-ketoisovalerate to form ketopantoate. The chain is 3-methyl-2-oxobutanoate hydroxymethyltransferase from Shewanella frigidimarina (strain NCIMB 400).